Consider the following 601-residue polypeptide: Coronin-like protein crn1 (601 aa).

WD repeat units lie at residues 79–119, 132–172, 174–213, 220–260, and 266–306; these read GHTA…TVME, GHSR…AHVS, KMDV…PVSV, AKNP…EPIG, and DTGS…FHYL. 2 disordered regions span residues 361-386 and 407-540; these read SDIY…KDAQ and SATV…VEEK. Composition is skewed to basic and acidic residues over residues 419–429, 437–453, and 462–495; these read KHNEEKVETPK, KPKE…EPEV, and KVEE…EKSF. Residues Ser-500 and Ser-501 each carry the phosphoserine modification. The span at 507–526 shows a compositional bias: basic and acidic residues; that stretch reads EDVKKEPSEEKKLEVSDEAP. Ser-553 carries the post-translational modification Phosphoserine. Residues 556–600 are a coiled coil; that stretch reads NLADLNKRFEGFEKRYEEELAIRDWKIAQLEDKLAKLTEAIKEKC.

Belongs to the WD repeat coronin family. Binds to F-actin.

The sequence is that of Coronin-like protein crn1 (crn1) from Schizosaccharomyces pombe (strain 972 / ATCC 24843) (Fission yeast).